We begin with the raw amino-acid sequence, 133 residues long: ATP synthase epsilon chain (133 aa).

The protein belongs to the ATPase epsilon chain family. As to quaternary structure, F-type ATPases have 2 components, CF(1) - the catalytic core - and CF(0) - the membrane proton channel. CF(1) has five subunits: alpha(3), beta(3), gamma(1), delta(1), epsilon(1). CF(0) has three main subunits: a, b and c.

The protein localises to the cell membrane. Functionally, produces ATP from ADP in the presence of a proton gradient across the membrane. The polypeptide is ATP synthase epsilon chain (Bacillus cytotoxicus (strain DSM 22905 / CIP 110041 / 391-98 / NVH 391-98)).